Consider the following 412-residue polypeptide: uncharacterized protein (412 aa).

Disordered stretches follow at residues 150 to 171 (NTPGSEQAQQQQQQQQQQQLGD), 177 to 196 (QITSSNNSGNSQQQQPQQQQ), and 302 to 412 (QAQQ…PLNP). Over residues 156–168 (QAQQQQQQQQQQQ) the composition is skewed to low complexity. 2 stretches are compositionally biased toward polar residues: residues 177-187 (QITSSNNSGNS) and 310-321 (MGSSPTHSSPTI). The segment covering 335–345 (GGIINTNTNLN) has biased composition (low complexity). The span at 350–363 (VSPNQPMPNSSPIL) shows a compositional bias: polar residues. Composition is skewed to low complexity over residues 364–373 (PTNASSVVPP) and 381–394 (TSNNNSNNLGTTSP).

This is an uncharacterized protein from Dictyostelium discoideum (Social amoeba).